The primary structure comprises 78 residues: Small ribosomal subunit protein bS18c (78 aa).

Belongs to the bacterial ribosomal protein bS18 family. In terms of assembly, part of the 30S ribosomal subunit.

The protein localises to the plastid. Its subcellular location is the chloroplast. The protein is Small ribosomal subunit protein bS18c of Oltmannsiellopsis viridis (Marine flagellate).